A 275-amino-acid polypeptide reads, in one-letter code: Large ribosomal subunit protein uL2c (275 aa).

Disordered regions lie at residues 1 to 28 and 227 to 251; these read MGIRIYRSYTPGTRNRSSSDFSEITKSK and PCDHPHGGGEGRSPIGRARPVTPWG. The span at 10–22 shows a compositional bias: polar residues; it reads TPGTRNRSSSDFS.

It belongs to the universal ribosomal protein uL2 family. As to quaternary structure, part of the 50S ribosomal subunit.

The protein localises to the plastid. Its subcellular location is the chloroplast. The sequence is that of Large ribosomal subunit protein uL2c (rpl2) from Rhodomonas salina (Cryptomonas salina).